Reading from the N-terminus, the 742-residue chain is Vesicle-fusing ATPase (742 aa).

ATP is bound by residues 499 to 504 (NGMVDC) and 539 to 546 (SGSGKTAL). Residue Thr-544 participates in Mg(2+) binding.

This sequence belongs to the AAA ATPase family. In terms of assembly, homohexamer. Binds to SNARE-SNAP complexes to form 20S particles. Requires Mg(2+) as cofactor.

The protein resides in the cytoplasm. It carries out the reaction ATP + H2O = ADP + phosphate + H(+). In terms of biological role, required for vesicle-mediated transport. Catalyzes the fusion of transport vesicles within the Golgi cisternae. Is also required for transport from the endoplasmic reticulum to the Golgi stack. Seems to function as a fusion protein required for the delivery of cargo proteins to all compartments of the Golgi stack independent of vesicle origin. Required for maintaining the normal morphology of the Golgi apparatus. In Arabidopsis thaliana (Mouse-ear cress), this protein is Vesicle-fusing ATPase.